The primary structure comprises 27 residues: Zinc metalloproteinase multactivase catalytic subunit (27 aa).

Residues 12 to 27 (FIELVIIVDHSXXTYK) enclose the Peptidase M12B domain. A Ca(2+)-binding site is contributed by E14.

Belongs to the venom metalloproteinase (M12B) family. P-III subfamily. P-IIId sub-subfamily. Heterodimer of a metalloproteinase subunit and a regulatory subunit comprising two homologous disulfide-linked lectins (AC P81798). Requires Zn(2+) as cofactor. In terms of tissue distribution, expressed by the venom gland.

Its subcellular location is the secreted. Functionally, this carinactivase-like calcium-dependent prothrombin (F2) activator activates prothrombin via recognition of the calcium ion bound conformation of its gamma-carboxyglutamic acid (GLA) domain, and the subsequent conversion of prothrombin to active thrombin is catalyzed by the catalytic subunit. The sequence is that of Zinc metalloproteinase multactivase catalytic subunit from Echis multisquamatus (Central Asian sand viper).